Consider the following 257-residue polypeptide: NAD-capped RNA hydrolase NudC (257 aa).

The substrate site is built by K25 and R69. Residues C98 and C101 each coordinate Zn(2+). E111 contributes to the substrate binding site. The Zn(2+) site is built by C116 and C119. Y124 is a binding site for substrate. Positions 125 to 248 (PQIAPCIIVA…TVARRLIEDT (124 aa)) constitute a Nudix hydrolase domain. 3 residues coordinate a divalent metal cation: A158, E174, and E178. Positions 159–180 (GFVEVGETLEQAVAREVMEESG) match the Nudix box motif. 192 to 199 (QPWPFPQS) provides a ligand contact to substrate. Residue E219 participates in a divalent metal cation binding. A241 is a substrate binding site.

This sequence belongs to the Nudix hydrolase family. NudC subfamily. In terms of assembly, homodimer. Mg(2+) serves as cofactor. The cofactor is Mn(2+). Zn(2+) is required as a cofactor.

It carries out the reaction a 5'-end NAD(+)-phospho-ribonucleoside in mRNA + H2O = a 5'-end phospho-adenosine-phospho-ribonucleoside in mRNA + beta-nicotinamide D-ribonucleotide + 2 H(+). The catalysed reaction is NAD(+) + H2O = beta-nicotinamide D-ribonucleotide + AMP + 2 H(+). The enzyme catalyses NADH + H2O = reduced beta-nicotinamide D-ribonucleotide + AMP + 2 H(+). Functionally, mRNA decapping enzyme that specifically removes the nicotinamide adenine dinucleotide (NAD) cap from a subset of mRNAs by hydrolyzing the diphosphate linkage to produce nicotinamide mononucleotide (NMN) and 5' monophosphate mRNA. The NAD-cap is present at the 5'-end of some mRNAs and stabilizes RNA against 5'-processing. Has preference for mRNAs with a 5'-end purine. Catalyzes the hydrolysis of a broad range of dinucleotide pyrophosphates. The protein is NAD-capped RNA hydrolase NudC of Escherichia coli (strain 55989 / EAEC).